Here is a 396-residue protein sequence, read N- to C-terminus: Phosphoglycerate kinase (396 aa).

Residues 21–23 (DFN), arginine 36, 59–62 (HLGK), arginine 119, and arginine 156 each bind substrate. Residues lysine 206, glycine 294, glutamate 325, and 352 to 355 (GGDS) contribute to the ATP site.

The protein belongs to the phosphoglycerate kinase family. As to quaternary structure, monomer.

It is found in the cytoplasm. It catalyses the reaction (2R)-3-phosphoglycerate + ATP = (2R)-3-phospho-glyceroyl phosphate + ADP. It functions in the pathway carbohydrate degradation; glycolysis; pyruvate from D-glyceraldehyde 3-phosphate: step 2/5. The protein is Phosphoglycerate kinase of Listeria monocytogenes serovar 1/2a (strain ATCC BAA-679 / EGD-e).